Here is a 426-residue protein sequence, read N- to C-terminus: Serine--tRNA ligase (426 aa).

L-serine is bound at residue 232 to 234; it reads TAE. Position 263–265 (263–265) interacts with ATP; it reads RSE. Glu-286 serves as a coordination point for L-serine. Position 350 to 353 (350 to 353) interacts with ATP; sequence EISS. Residue Ser-385 coordinates L-serine.

The protein belongs to the class-II aminoacyl-tRNA synthetase family. Type-1 seryl-tRNA synthetase subfamily. Homodimer. The tRNA molecule binds across the dimer.

The protein localises to the cytoplasm. It carries out the reaction tRNA(Ser) + L-serine + ATP = L-seryl-tRNA(Ser) + AMP + diphosphate + H(+). It catalyses the reaction tRNA(Sec) + L-serine + ATP = L-seryl-tRNA(Sec) + AMP + diphosphate + H(+). The protein operates within aminoacyl-tRNA biosynthesis; selenocysteinyl-tRNA(Sec) biosynthesis; L-seryl-tRNA(Sec) from L-serine and tRNA(Sec): step 1/1. Its function is as follows. Catalyzes the attachment of serine to tRNA(Ser). Is also able to aminoacylate tRNA(Sec) with serine, to form the misacylated tRNA L-seryl-tRNA(Sec), which will be further converted into selenocysteinyl-tRNA(Sec). The chain is Serine--tRNA ligase from Pediococcus pentosaceus (strain ATCC 25745 / CCUG 21536 / LMG 10740 / 183-1w).